Consider the following 78-residue polypeptide: Pancreatic polypeptide prohormone (78 aa).

The first 19 residues, 1 to 19, serve as a signal peptide directing secretion; that stretch reads LLLSTCVALLLQPPLGALG. A Tyrosine amide modification is found at Tyr-55.

It belongs to the NPY family.

It localises to the secreted. Functionally, hormone secreted by pancreatic cells that acts as a regulator of pancreatic and gastrointestinal functions probably by signaling through the G protein-coupled receptor NPY4R2. This is Pancreatic polypeptide prohormone (PPY) from Ovis aries (Sheep).